Reading from the N-terminus, the 369-residue chain is Putative esterase slr0264 (369 aa).

Active-site charge relay system residues include Ser-162, Asp-303, and His-334.

Belongs to the AB hydrolase superfamily. AB hydrolase 4 family.

The sequence is that of Putative esterase slr0264 from Synechocystis sp. (strain ATCC 27184 / PCC 6803 / Kazusa).